The primary structure comprises 256 residues: Gamma carbonic anhydrase-like 2, mitochondrial (256 aa).

The N-terminal 33 residues, 1–33, are a transit peptide targeting the mitochondrion; sequence MATSLARISKRSITSAVSSNLIRRYFAAEAVAV. Substrate contacts are provided by residues 103-105 and 118-119; these read RGD and QE. Residue His124 coordinates Zn(2+). Arg152, Gln164, and Tyr231 together coordinate substrate.

The protein belongs to the gamma-class carbonic anhydrase family. As to quaternary structure, component of the mitochondrial oxidoreductase respiratory chain complex I; element of the extra matrix-exposed domain, which is attached to the membrane arm of this complex. Interacts with GAMMACA2.

The protein resides in the mitochondrion membrane. Functionally, involved in complex I assembly in mitochondria and respiration. This is Gamma carbonic anhydrase-like 2, mitochondrial (GAMMACAL2) from Arabidopsis thaliana (Mouse-ear cress).